A 230-amino-acid polypeptide reads, in one-letter code: uncharacterized protein (230 aa).

An N-terminal signal peptide occupies residues 1–18 (MRQYTSKSILFMTAIALS).

This is an uncharacterized protein from Pasteurella multocida (strain Pm70).